The sequence spans 380 residues: Alanine racemase (380 aa).

K41 serves as the catalytic Proton acceptor; specific for D-alanine. K41 is subject to N6-(pyridoxal phosphate)lysine. R141 is a substrate binding site. The active-site Proton acceptor; specific for L-alanine is Y271. A substrate-binding site is contributed by M318.

This sequence belongs to the alanine racemase family. Requires pyridoxal 5'-phosphate as cofactor.

The enzyme catalyses L-alanine = D-alanine. It participates in amino-acid biosynthesis; D-alanine biosynthesis; D-alanine from L-alanine: step 1/1. Functionally, catalyzes the interconversion of L-alanine and D-alanine. May also act on other amino acids. The sequence is that of Alanine racemase (alr) from Latilactobacillus sakei subsp. sakei (strain 23K) (Lactobacillus sakei subsp. sakei).